The primary structure comprises 213 residues: Uridine kinase (213 aa).

13 to 20 (GASASGKS) contributes to the ATP binding site.

Belongs to the uridine kinase family.

The protein resides in the cytoplasm. The enzyme catalyses uridine + ATP = UMP + ADP + H(+). It catalyses the reaction cytidine + ATP = CMP + ADP + H(+). The protein operates within pyrimidine metabolism; CTP biosynthesis via salvage pathway; CTP from cytidine: step 1/3. It participates in pyrimidine metabolism; UMP biosynthesis via salvage pathway; UMP from uridine: step 1/1. This is Uridine kinase from Haemophilus influenzae (strain PittEE).